Here is a 195-residue protein sequence, read N- to C-terminus: Large ribosomal subunit protein bL27c (195 aa).

A chloroplast-targeting transit peptide spans Met1–Met60.

The protein belongs to the bacterial ribosomal protein bL27 family. In terms of assembly, part of the 50S ribosomal subunit.

The protein localises to the plastid. Its subcellular location is the chloroplast. In Oryza sativa subsp. japonica (Rice), this protein is Large ribosomal subunit protein bL27c (RPL27).